The sequence spans 294 residues: Probable 2-(5''-triphosphoribosyl)-3'-dephosphocoenzyme-A synthase (294 aa).

It belongs to the CitG/MdcB family.

It catalyses the reaction 3'-dephospho-CoA + ATP = 2'-(5''-triphospho-alpha-D-ribosyl)-3'-dephospho-CoA + adenine. The polypeptide is Probable 2-(5''-triphosphoribosyl)-3'-dephosphocoenzyme-A synthase (Streptococcus equi subsp. equi (strain 4047)).